A 184-amino-acid polypeptide reads, in one-letter code: Ribulose bisphosphate carboxylase small subunit, chloroplastic 2 (184 aa).

The transit peptide at 1–59 (MASSMMSNAATAVAVAATSGGAQANMVAPFNGLKSIASFPVTRKSNDITSIASNGGRVQ) directs the protein to the chloroplast.

Belongs to the RuBisCO small chain family. Heterohexadecamer of 8 large and 8 small subunits.

Its subcellular location is the plastid. The protein resides in the chloroplast. Its function is as follows. RuBisCO catalyzes two reactions: the carboxylation of D-ribulose 1,5-bisphosphate, the primary event in carbon dioxide fixation, as well as the oxidative fragmentation of the pentose substrate. Both reactions occur simultaneously and in competition at the same active site. Although the small subunit is not catalytic it is essential for maximal activity. In Amaranthus hypochondriacus (Prince-of-Wales feather), this protein is Ribulose bisphosphate carboxylase small subunit, chloroplastic 2.